The sequence spans 270 residues: MKPRALVLHATGTNRDGDAARALELAGAEPEIVHINKLKAKEKNWKDYEILVIPGGFSYADALGAGKLFALDLSNYFFDEVSEFVAAGKPVIGICNGFQVLVKSGILPGKEKDGKVILDKDGYKNRQATLTYNKQGRFECRFTTMIPQKSNCIWTKDLKGNIHCPIAHGEGRFLTDSQKTLDDLFEKGQIALVYGGKDAEKSIPANGEYPFNPNGSLADIAGICNTKGNVLGLMPHPENNVVIRERDSEEEKERTKLCLDMWKAGVNYVL.

The Glutamine amidotransferase type-1 domain occupies 5 to 251 (ALVLHATGTN…VIRERDSEEE (247 aa)). The active-site Nucleophile is the Cys-95. Active-site residues include His-236 and Glu-238.

In terms of assembly, part of the FGAM synthase complex composed of 1 PurL, 1 PurQ and 2 PurS subunits.

The protein resides in the cytoplasm. It catalyses the reaction N(2)-formyl-N(1)-(5-phospho-beta-D-ribosyl)glycinamide + L-glutamine + ATP + H2O = 2-formamido-N(1)-(5-O-phospho-beta-D-ribosyl)acetamidine + L-glutamate + ADP + phosphate + H(+). It carries out the reaction L-glutamine + H2O = L-glutamate + NH4(+). It functions in the pathway purine metabolism; IMP biosynthesis via de novo pathway; 5-amino-1-(5-phospho-D-ribosyl)imidazole from N(2)-formyl-N(1)-(5-phospho-D-ribosyl)glycinamide: step 1/2. Part of the phosphoribosylformylglycinamidine synthase complex involved in the purines biosynthetic pathway. Catalyzes the ATP-dependent conversion of formylglycinamide ribonucleotide (FGAR) and glutamine to yield formylglycinamidine ribonucleotide (FGAM) and glutamate. The FGAM synthase complex is composed of three subunits. PurQ produces an ammonia molecule by converting glutamine to glutamate. PurL transfers the ammonia molecule to FGAR to form FGAM in an ATP-dependent manner. PurS interacts with PurQ and PurL and is thought to assist in the transfer of the ammonia molecule from PurQ to PurL. The chain is Phosphoribosylformylglycinamidine synthase subunit PurQ from Treponema denticola (strain ATCC 35405 / DSM 14222 / CIP 103919 / JCM 8153 / KCTC 15104).